Reading from the N-terminus, the 618-residue chain is DNA ligase 2 (618 aa).

A compositionally biased stretch (basic and acidic residues) spans 197-208 (DKKTLESREDAK). The interval 197 to 250 (DKKTLESREDAKSVPPASQPEITNKISGDTSPNTSESVQTKKSDPDTSSNVDPS) is disordered. The span at 216–234 (PEITNKISGDTSPNTSESV) shows a compositional bias: polar residues. ATP is bound at residue Glu-312. The active-site N6-AMP-lysine intermediate is Lys-314. ATP contacts are provided by Arg-319, Arg-334, Glu-363, Phe-403, Arg-476, and Lys-482. Residues 459–480 (HEGVMLKDPDSTYNPGSRGQHW) form a disordered region.

The protein belongs to the ATP-dependent DNA ligase family. It depends on Mg(2+) as a cofactor.

The enzyme catalyses ATP + (deoxyribonucleotide)n-3'-hydroxyl + 5'-phospho-(deoxyribonucleotide)m = (deoxyribonucleotide)n+m + AMP + diphosphate.. Its function is as follows. DNA ligase that seals nicks in double-stranded DNA during DNA replication, DNA recombination and DNA repair. This chain is DNA ligase 2, found in Haloquadratum walsbyi (strain DSM 16790 / HBSQ001).